A 359-amino-acid chain; its full sequence is Ras association domain-containing protein 7 (359 aa).

Positions 6-89 (VAMELKVWVD…VQFVLRRTGP (84 aa)) constitute a Ras-associating domain. Residues 87 to 123 (TGPSLSGRPSSDNCPPPERCPVRASLPPKPSAIPGRE) form a disordered region. Positions 89–99 (PSLSGRPSSDN) are enriched in polar residues. Coiled-coil stretches lie at residues 180-208 (WEQE…TAEH) and 242-301 (AAER…QQFI). The segment at 339-359 (SHILVSSLSPEVPPMRQSSWR) is disordered.

Interacts with MAP2K7 and GTP-bound NRAS. Post-translationally, polyubiquitinated and degraded by the proteasome upon prolonged stress stimuli.

It is found in the cytoplasm. It localises to the cytoskeleton. Its subcellular location is the microtubule organizing center. The protein resides in the centrosome. Its function is as follows. Negatively regulates stress-induced JNK activation and apoptosis by promoting MAP2K7 phosphorylation and inhibiting its ability to activate JNK. Following prolonged stress, anti-apoptotic effect stops because of degradation of RASSF7 protein via the ubiquitin-proteasome pathway. Required for the activation of AURKB and chromosomal congression during mitosis where it stimulates microtubule polymerization. The polypeptide is Ras association domain-containing protein 7 (Rassf7) (Mus musculus (Mouse)).